The chain runs to 262 residues: Shikimate dehydrogenase (NADP(+)) (262 aa).

Residues 15–17 (SRS) and threonine 62 each bind shikimate. The Proton acceptor role is filled by lysine 66. Glutamate 78 contacts NADP(+). Positions 87 and 102 each coordinate shikimate. NADP(+)-binding positions include 126 to 130 (GAGGA), 150 to 155 (NRTLAR), and methionine 214. Tyrosine 216 contacts shikimate. An NADP(+)-binding site is contributed by glycine 236.

This sequence belongs to the shikimate dehydrogenase family. Homodimer.

The catalysed reaction is shikimate + NADP(+) = 3-dehydroshikimate + NADPH + H(+). Its pathway is metabolic intermediate biosynthesis; chorismate biosynthesis; chorismate from D-erythrose 4-phosphate and phosphoenolpyruvate: step 4/7. In terms of biological role, involved in the biosynthesis of the chorismate, which leads to the biosynthesis of aromatic amino acids. Catalyzes the reversible NADPH linked reduction of 3-dehydroshikimate (DHSA) to yield shikimate (SA). The polypeptide is Shikimate dehydrogenase (NADP(+)) (Acinetobacter baumannii (strain AB0057)).